The primary structure comprises 329 residues: Malate dehydrogenase (329 aa).

An NAD(+)-binding site is contributed by G12–G18. R93 and R99 together coordinate substrate. NAD(+) is bound by residues N106, Q113, and V130–N132. Residues N132 and R163 each contribute to the substrate site. H188 acts as the Proton acceptor in catalysis.

It belongs to the LDH/MDH superfamily. MDH type 2 family.

It catalyses the reaction (S)-malate + NAD(+) = oxaloacetate + NADH + H(+). Its function is as follows. Catalyzes the reversible oxidation of malate to oxaloacetate. This Frankia alni (strain DSM 45986 / CECT 9034 / ACN14a) protein is Malate dehydrogenase.